Here is a 482-residue protein sequence, read N- to C-terminus: Tripartite motif-containing protein 10 (482 aa).

Residues 16 to 61 (CPICQGTLREPVTIDCGHNFCCVCLTRYLEIPCLDPGELPTCPLCK) form an RING-type zinc finger. The segment at 95–136 (EEEDVCLEHREKVYYFCEDDEMQLCVVCREAWEHRHHTVRFL) adopts a B box-type zinc-finger fold. The Zn(2+) site is built by Cys-100, His-103, Cys-122, and His-128. The B30.2/SPRY domain occupies 293–482 (REMKTFLEKL…GRGSKFSLSS (190 aa)).

It belongs to the TRIM/RBCC family. As to quaternary structure, interacts with IFNAR1; this interaction prevents association of IFNAR1 with TYK2.

It is found in the cytoplasm. Functionally, E3 ligase that plays an essential role in the differentiation and survival of terminal erythroid cells. May directly bind to PTEN and promote its ubiquitination, resulting in its proteasomal degradation and activation of hypertrophic signaling. In addition, plays a role in immune response regulation by repressing the phosphorylation of STAT1 and STAT2 in the interferon/JAK/STAT signaling pathway independent of its E3 ligase activity. Mechanistically, interacts with the intracellular domain of IFNAR1 and thereby inhibits the association of TYK2 and IFNAR1. In Sus scrofa (Pig), this protein is Tripartite motif-containing protein 10 (TRIM10).